Consider the following 446-residue polypeptide: DNA repair protein RadA (446 aa).

The C4-type zinc finger occupies 10–27 (CQACGNQQSKWLGKCPDC). 96 to 103 (GSPGVGKS) contributes to the ATP binding site. A RadA KNRFG motif motif is present at residues 253-257 (KNRFG). Positions 349-446 (DVFVNISGGV…KELSQVLEWM (98 aa)) are lon-protease-like.

Belongs to the RecA family. RadA subfamily.

DNA-dependent ATPase involved in processing of recombination intermediates, plays a role in repairing DNA breaks. Stimulates the branch migration of RecA-mediated strand transfer reactions, allowing the 3' invading strand to extend heteroduplex DNA faster. Binds ssDNA in the presence of ADP but not other nucleotides, has ATPase activity that is stimulated by ssDNA and various branched DNA structures, but inhibited by SSB. Does not have RecA's homology-searching function. The protein is DNA repair protein RadA of Campylobacter jejuni subsp. jejuni serotype O:2 (strain ATCC 700819 / NCTC 11168).